Reading from the N-terminus, the 84-residue chain is Large ribosomal subunit protein bL27 (84 aa).

The disordered stretch occupies residues methionine 1–lysine 24.

The protein belongs to the bacterial ribosomal protein bL27 family.

This is Large ribosomal subunit protein bL27 from Pelobacter propionicus (strain DSM 2379 / NBRC 103807 / OttBd1).